Reading from the N-terminus, the 87-residue chain is Sodium channel neurotoxin MeuNaTxalpha-5* (87 aa).

An N-terminal signal peptide occupies residues M1–S19. The 65-residue stretch at R21–H85 folds into the LCN-type CS-alpha/beta domain. Intrachain disulfides connect C31/C84, C35/C57, C43/C67, and C47/C69. The propeptide at R86 to R87 is removed by a carboxypeptidase.

This sequence belongs to the long (4 C-C) scorpion toxin superfamily. Sodium channel inhibitor family. Alpha subfamily. In terms of tissue distribution, expressed by the venom gland.

It is found in the secreted. Alpha toxins bind voltage-independently at site-3 of sodium channels (Nav) and inhibit the inactivation of the activated channels, thereby blocking neuronal transmission. This toxin inhibits inactivation of Nav1.6/SCN8A (EC(50)=790 nM) and drosophila DmNav1 (EC(50)=280 nM). The toxin (1 uM) does not significantly shift the midpoint of activation at the two channels, but induces a significant depolarizing shift in the V(1/2) of inactivation of the channels. Has antimicrobial activity. This Mesobuthus eupeus (Lesser Asian scorpion) protein is Sodium channel neurotoxin MeuNaTxalpha-5*.